Reading from the N-terminus, the 132-residue chain is Myelin P2 protein (132 aa).

At S2 the chain carries N-acetylserine. R107 serves as a coordination point for (9Z)-octadecenoate. Position 107 (R107) interacts with hexadecanoate. C118 and C125 form a disulfide bridge. Residue 127 to 129 (RIY) participates in (9Z)-octadecenoate binding. 127–129 (RIY) is a binding site for hexadecanoate.

This sequence belongs to the calycin superfamily. Fatty-acid binding protein (FABP) family. As to quaternary structure, monomer.

The protein resides in the cytoplasm. Functionally, may play a role in lipid transport protein in Schwann cells. May bind cholesterol. The polypeptide is Myelin P2 protein (Sus scrofa (Pig)).